Here is a 180-residue protein sequence, read N- to C-terminus: Probable RNA 2'-phosphotransferase (180 aa).

Belongs to the KptA/TPT1 family.

Its function is as follows. Removes the 2'-phosphate from RNA via an intermediate in which the phosphate is ADP-ribosylated by NAD followed by a presumed transesterification to release the RNA and generate ADP-ribose 1''-2''-cyclic phosphate (APPR&gt;P). May function as an ADP-ribosylase. In Thermococcus kodakarensis (strain ATCC BAA-918 / JCM 12380 / KOD1) (Pyrococcus kodakaraensis (strain KOD1)), this protein is Probable RNA 2'-phosphotransferase.